We begin with the raw amino-acid sequence, 248 residues long: Pyridoxine 5'-phosphate synthase (248 aa).

3-amino-2-oxopropyl phosphate is bound at residue Asn-12. Residue 14–15 participates in 1-deoxy-D-xylulose 5-phosphate binding; the sequence is DH. Arg-23 is a binding site for 3-amino-2-oxopropyl phosphate. His-48 acts as the Proton acceptor in catalysis. Arg-50 and His-55 together coordinate 1-deoxy-D-xylulose 5-phosphate. Glu-75 functions as the Proton acceptor in the catalytic mechanism. Thr-105 serves as a coordination point for 1-deoxy-D-xylulose 5-phosphate. The active-site Proton donor is His-196. 3-amino-2-oxopropyl phosphate is bound by residues Gly-197 and 218-219; that span reads GH.

The protein belongs to the PNP synthase family. In terms of assembly, homooctamer; tetramer of dimers.

The protein resides in the cytoplasm. It catalyses the reaction 3-amino-2-oxopropyl phosphate + 1-deoxy-D-xylulose 5-phosphate = pyridoxine 5'-phosphate + phosphate + 2 H2O + H(+). It functions in the pathway cofactor biosynthesis; pyridoxine 5'-phosphate biosynthesis; pyridoxine 5'-phosphate from D-erythrose 4-phosphate: step 5/5. In terms of biological role, catalyzes the complicated ring closure reaction between the two acyclic compounds 1-deoxy-D-xylulose-5-phosphate (DXP) and 3-amino-2-oxopropyl phosphate (1-amino-acetone-3-phosphate or AAP) to form pyridoxine 5'-phosphate (PNP) and inorganic phosphate. The chain is Pyridoxine 5'-phosphate synthase from Pseudomonas aeruginosa (strain UCBPP-PA14).